The sequence spans 225 residues: Phosphoribosylformylglycinamidine synthase subunit PurQ (225 aa).

Residues 4–225 (RIGVITFPGT…LSVLDTLVTA (222 aa)) enclose the Glutamine amidotransferase type-1 domain. Residue Cys87 is the Nucleophile of the active site. Residues His196 and Glu198 contribute to the active site.

As to quaternary structure, part of the FGAM synthase complex composed of 1 PurL, 1 PurQ and 2 PurS subunits.

It localises to the cytoplasm. It carries out the reaction N(2)-formyl-N(1)-(5-phospho-beta-D-ribosyl)glycinamide + L-glutamine + ATP + H2O = 2-formamido-N(1)-(5-O-phospho-beta-D-ribosyl)acetamidine + L-glutamate + ADP + phosphate + H(+). The catalysed reaction is L-glutamine + H2O = L-glutamate + NH4(+). The protein operates within purine metabolism; IMP biosynthesis via de novo pathway; 5-amino-1-(5-phospho-D-ribosyl)imidazole from N(2)-formyl-N(1)-(5-phospho-D-ribosyl)glycinamide: step 1/2. Functionally, part of the phosphoribosylformylglycinamidine synthase complex involved in the purines biosynthetic pathway. Catalyzes the ATP-dependent conversion of formylglycinamide ribonucleotide (FGAR) and glutamine to yield formylglycinamidine ribonucleotide (FGAM) and glutamate. The FGAM synthase complex is composed of three subunits. PurQ produces an ammonia molecule by converting glutamine to glutamate. PurL transfers the ammonia molecule to FGAR to form FGAM in an ATP-dependent manner. PurS interacts with PurQ and PurL and is thought to assist in the transfer of the ammonia molecule from PurQ to PurL. The polypeptide is Phosphoribosylformylglycinamidine synthase subunit PurQ (Nocardia farcinica (strain IFM 10152)).